A 418-amino-acid polypeptide reads, in one-letter code: Serine--tRNA ligase (418 aa).

231 to 233 (TAE) contributes to the L-serine binding site. 262 to 264 (RSE) contributes to the ATP binding site. Glutamate 285 contacts L-serine. Residue 349 to 352 (EISS) coordinates ATP. Serine 385 provides a ligand contact to L-serine.

This sequence belongs to the class-II aminoacyl-tRNA synthetase family. Type-1 seryl-tRNA synthetase subfamily. Homodimer. The tRNA molecule binds across the dimer.

Its subcellular location is the cytoplasm. It catalyses the reaction tRNA(Ser) + L-serine + ATP = L-seryl-tRNA(Ser) + AMP + diphosphate + H(+). The enzyme catalyses tRNA(Sec) + L-serine + ATP = L-seryl-tRNA(Sec) + AMP + diphosphate + H(+). It participates in aminoacyl-tRNA biosynthesis; selenocysteinyl-tRNA(Sec) biosynthesis; L-seryl-tRNA(Sec) from L-serine and tRNA(Sec): step 1/1. Functionally, catalyzes the attachment of serine to tRNA(Ser). Is also able to aminoacylate tRNA(Sec) with serine, to form the misacylated tRNA L-seryl-tRNA(Sec), which will be further converted into selenocysteinyl-tRNA(Sec). The sequence is that of Serine--tRNA ligase from Ureaplasma urealyticum serovar 10 (strain ATCC 33699 / Western).